The chain runs to 371 residues: S-adenosylmethionine:tRNA ribosyltransferase-isomerase (371 aa).

It belongs to the QueA family. In terms of assembly, monomer.

It localises to the cytoplasm. The catalysed reaction is 7-aminomethyl-7-carbaguanosine(34) in tRNA + S-adenosyl-L-methionine = epoxyqueuosine(34) in tRNA + adenine + L-methionine + 2 H(+). The protein operates within tRNA modification; tRNA-queuosine biosynthesis. Its function is as follows. Transfers and isomerizes the ribose moiety from AdoMet to the 7-aminomethyl group of 7-deazaguanine (preQ1-tRNA) to give epoxyqueuosine (oQ-tRNA). The chain is S-adenosylmethionine:tRNA ribosyltransferase-isomerase from Prochlorococcus marinus (strain MIT 9303).